A 1098-amino-acid chain; its full sequence is Bifunctional helicase and thymine dioxygenase JBP2 (1098 aa).

The thymine dioxygenase stretch occupies residues 1–540; that stretch reads MLNGLTRVST…PPLFVPTRLA (540 aa). 3 residues coordinate Fe cation: His-415, Asp-417, and His-465. 2-oxoglutarate is bound at residue Arg-479. Residues 541–1098 are DNA Helicase; the sequence is SHLAPVQLAA…RYQESVRESE (558 aa). The 176-residue stretch at 555–730 folds into the Helicase ATP-binding domain; that stretch reads VERTEKQSGC…YRLVGWVNKG (176 aa). 568 to 575 contacts ATP; sequence MTMGLGKT. The DEAH box signature appears at 681 to 684; the sequence is DEGH. In terms of domain architecture, Helicase C-terminal spans 897 to 1057; sequence VLVDIVLRVQ…ALPDELEDCA (161 aa).

It in the C-terminal section; belongs to the SNF2/RAD54 helicase family. The protein in the N-terminal section; belongs to the TET family. JBP2 subfamily. Fe(2+) serves as cofactor.

Its subcellular location is the nucleus. It catalyses the reaction ATP + H2O = ADP + phosphate + H(+). The catalysed reaction is thymine + 2-oxoglutarate + O2 = 5-hydroxymethyluracil + succinate + CO2. Dioxygenase that catalyzes the first step of DNA base J (beta-d-glucosyl-HOMedU) biosynthesis by converting thymine to 5-hydroxymethyluracil (HOMedU). DNA base J is a hypermodified thymidine residue found in the genome of kinetoplastid parasites, which is localized primarily to repetitive DNA, namely the telomeres, and is implicated in the regulation of antigenic variation. Probably also acts as a DNA helicase. Recognizes and binds specific regions of the genome, hydrolyzes ATP and allows the DNA base J de novo synthesis. Involved in initial synthesis of DNA base J, JBP1 being able to act via the basal level of DNA base J and propagate further synthesis. In contrast to JBP1, it does not specifically bind DNA base J, however it binds chromatin. The sequence is that of Bifunctional helicase and thymine dioxygenase JBP2 (JBP2) from Leishmania tarentolae (Sauroleishmania tarentolae).